A 415-amino-acid polypeptide reads, in one-letter code: Serine hydroxymethyltransferase (415 aa).

(6S)-5,6,7,8-tetrahydrofolate is bound by residues Leu117 and 121–123 (GHL). An N6-(pyridoxal phosphate)lysine modification is found at Lys226.

The protein belongs to the SHMT family. As to quaternary structure, homodimer. The cofactor is pyridoxal 5'-phosphate.

The protein localises to the cytoplasm. It carries out the reaction (6R)-5,10-methylene-5,6,7,8-tetrahydrofolate + glycine + H2O = (6S)-5,6,7,8-tetrahydrofolate + L-serine. Its pathway is one-carbon metabolism; tetrahydrofolate interconversion. It participates in amino-acid biosynthesis; glycine biosynthesis; glycine from L-serine: step 1/1. Catalyzes the reversible interconversion of serine and glycine with tetrahydrofolate (THF) serving as the one-carbon carrier. This reaction serves as the major source of one-carbon groups required for the biosynthesis of purines, thymidylate, methionine, and other important biomolecules. Also exhibits THF-independent aldolase activity toward beta-hydroxyamino acids, producing glycine and aldehydes, via a retro-aldol mechanism. The sequence is that of Serine hydroxymethyltransferase from Dehalococcoides mccartyi (strain CBDB1).